A 153-amino-acid polypeptide reads, in one-letter code: NADPH-dependent 7-cyano-7-deazaguanine reductase (153 aa).

Cys-51 serves as the catalytic Thioimide intermediate. Residue Asp-58 is the Proton donor of the active site. Residues 73–75 (LES) and 92–93 (HE) contribute to the substrate site.

Belongs to the GTP cyclohydrolase I family. QueF type 1 subfamily.

Its subcellular location is the cytoplasm. The enzyme catalyses 7-aminomethyl-7-carbaguanine + 2 NADP(+) = 7-cyano-7-deazaguanine + 2 NADPH + 3 H(+). Its pathway is tRNA modification; tRNA-queuosine biosynthesis. Its function is as follows. Catalyzes the NADPH-dependent reduction of 7-cyano-7-deazaguanine (preQ0) to 7-aminomethyl-7-deazaguanine (preQ1). The sequence is that of NADPH-dependent 7-cyano-7-deazaguanine reductase from Bradyrhizobium diazoefficiens (strain JCM 10833 / BCRC 13528 / IAM 13628 / NBRC 14792 / USDA 110).